The chain runs to 236 residues: N-acetyl-alpha-D-glucosaminyl L-malate deacetylase 1 (236 aa).

Residues His-12, Asp-15, and His-113 each coordinate Zn(2+).

It belongs to the PIGL family. The cofactor is Zn(2+).

It catalyses the reaction (S)-malyl N-acetyl-alpha-D-glucosaminide + H2O = (S)-malyl alpha-D-glucosaminide + acetate. Involved in bacillithiol (BSH) biosynthesis. Catalyzes the second step of the pathway, the deacetylation of N-acetylglucosaminylmalate (GlcNAc-Mal) to glucosamine malate (GlcN-Mal). The protein is N-acetyl-alpha-D-glucosaminyl L-malate deacetylase 1 of Bacillus subtilis (strain 168).